The sequence spans 225 residues: PKHD-type hydroxylase YbiX (225 aa).

In terms of domain architecture, Fe2OG dioxygenase spans 78–177; sequence TLSTPLFNRY…RVASFMWIQS (100 aa). Fe cation-binding residues include His96, Asp98, and His158. Arg168 lines the 2-oxoglutarate pocket.

The cofactor is Fe(2+). It depends on L-ascorbate as a cofactor.

This is PKHD-type hydroxylase YbiX from Shigella boydii serotype 18 (strain CDC 3083-94 / BS512).